A 1296-amino-acid chain; its full sequence is Phosphoribosylformylglycinamidine synthase (1296 aa).

A disordered region spans residues 304-323 (WPGAATGSGGEIRDEGATGR). Residues 306 to 317 (GAATGSGGEIRD) and Ala677 each bind ATP. Asp678, Glu717, Asn721, and Asp885 together coordinate Mg(2+). Ser887 is a binding site for ATP. Positions 1000–1013 (PDCADQEHQAKQDE) are enriched in basic and acidic residues. A disordered region spans residues 1000–1019 (PDCADQEHQAKQDESDPGLN). The 254-residue stretch at 1043–1296 (VAVLREQGVN…MFRNARKQLG (254 aa)) folds into the Glutamine amidotransferase type-1 domain. Cys1136 acts as the Nucleophile in catalysis. Residues His1261 and Glu1263 contribute to the active site.

The protein in the N-terminal section; belongs to the FGAMS family. In terms of assembly, monomer.

The protein resides in the cytoplasm. It catalyses the reaction N(2)-formyl-N(1)-(5-phospho-beta-D-ribosyl)glycinamide + L-glutamine + ATP + H2O = 2-formamido-N(1)-(5-O-phospho-beta-D-ribosyl)acetamidine + L-glutamate + ADP + phosphate + H(+). It functions in the pathway purine metabolism; IMP biosynthesis via de novo pathway; 5-amino-1-(5-phospho-D-ribosyl)imidazole from N(2)-formyl-N(1)-(5-phospho-D-ribosyl)glycinamide: step 1/2. Functionally, phosphoribosylformylglycinamidine synthase involved in the purines biosynthetic pathway. Catalyzes the ATP-dependent conversion of formylglycinamide ribonucleotide (FGAR) and glutamine to yield formylglycinamidine ribonucleotide (FGAM) and glutamate. This Yersinia pestis bv. Antiqua (strain Nepal516) protein is Phosphoribosylformylglycinamidine synthase.